A 432-amino-acid chain; its full sequence is Gamma-glutamyl phosphate reductase (432 aa).

This sequence belongs to the gamma-glutamyl phosphate reductase family.

It localises to the cytoplasm. The catalysed reaction is L-glutamate 5-semialdehyde + phosphate + NADP(+) = L-glutamyl 5-phosphate + NADPH + H(+). It functions in the pathway amino-acid biosynthesis; L-proline biosynthesis; L-glutamate 5-semialdehyde from L-glutamate: step 2/2. In terms of biological role, catalyzes the NADPH-dependent reduction of L-glutamate 5-phosphate into L-glutamate 5-semialdehyde and phosphate. The product spontaneously undergoes cyclization to form 1-pyrroline-5-carboxylate. This chain is Gamma-glutamyl phosphate reductase, found in Clavibacter michiganensis subsp. michiganensis (strain NCPPB 382).